The primary structure comprises 219 residues: Probable GTP-binding protein EngB (219 aa).

The EngB-type G domain occupies 31 to 205; sequence VGVEIAFAGR…LSILNEWCHP (175 aa). GTP contacts are provided by residues 39 to 46, 66 to 70, 84 to 87, 151 to 154, and 184 to 186; these read GRSNAGKS, GRTQL, DLPG, TKSD, and FSA. S46 and T68 together coordinate Mg(2+).

The protein belongs to the TRAFAC class TrmE-Era-EngA-EngB-Septin-like GTPase superfamily. EngB GTPase family. Mg(2+) is required as a cofactor.

Its function is as follows. Necessary for normal cell division and for the maintenance of normal septation. The sequence is that of Probable GTP-binding protein EngB from Shewanella sp. (strain W3-18-1).